The sequence spans 172 residues: Protein/nucleic acid deglycase 2 (172 aa).

Residues 3–171 (KKIAVLITDE…FNREALRLLG (169 aa)) form the PfpI endopeptidase domain. Residue cysteine 104 is the Nucleophile of the active site.

The protein belongs to the peptidase C56 family. In terms of assembly, exists in monomeric, trimeric, and hexameric forms.

It is found in the cytoplasm. It carries out the reaction N(omega)-(1-hydroxy-2-oxopropyl)-L-arginyl-[protein] + H2O = lactate + L-arginyl-[protein] + H(+). The enzyme catalyses N(6)-(1-hydroxy-2-oxopropyl)-L-lysyl-[protein] + H2O = lactate + L-lysyl-[protein] + H(+). The catalysed reaction is S-(1-hydroxy-2-oxopropyl)-L-cysteinyl-[protein] + H2O = lactate + L-cysteinyl-[protein] + H(+). It catalyses the reaction N(omega)-(1-hydroxy-2-oxoethyl)-L-arginyl-[protein] + H2O = L-arginyl-[protein] + glycolate + H(+). It carries out the reaction N(6)-(1-hydroxy-2-oxoethyl)-L-lysyl-[protein] + H2O = glycolate + L-lysyl-[protein] + H(+). The enzyme catalyses S-(1-hydroxy-2-oxoethyl)-L-cysteinyl-[protein] + H2O = glycolate + L-cysteinyl-[protein] + H(+). The catalysed reaction is N(2)-(1-hydroxy-2-oxopropyl)-dGTP + H2O = lactate + dGTP + H(+). It catalyses the reaction N(2)-(1-hydroxy-2-oxopropyl)-GTP + H2O = lactate + GTP + H(+). It carries out the reaction N(2)-(1-hydroxy-2-oxopropyl)-GDP + H2O = lactate + GDP + H(+). The enzyme catalyses N(2)-(1-hydroxy-2-oxopropyl)-GMP + H2O = lactate + GMP + H(+). The catalysed reaction is N(2)-(1-hydroxy-2-oxoethyl)-dGTP + H2O = dGTP + glycolate + H(+). It catalyses the reaction N(2)-(1-hydroxy-2-oxoethyl)-GTP + H2O = glycolate + GTP + H(+). It carries out the reaction N(2)-(1-hydroxy-2-oxoethyl)-GDP + H2O = glycolate + GDP + H(+). The enzyme catalyses N(2)-(1-hydroxy-2-oxoethyl)-GMP + H2O = glycolate + GMP + H(+). The catalysed reaction is an N(2)-(1-hydroxy-2-oxopropyl)-guanosine in RNA + H2O = a guanosine in RNA + lactate + H(+). It catalyses the reaction an N(2)-(1-hydroxy-2-oxopropyl)-2'-deoxyguanosine in DNA + H2O = a 2'-deoxyguanosine in DNA + lactate + H(+). It carries out the reaction an N(2)-(1-hydroxy-2-oxoethyl)-guanosine in RNA + H2O = a guanosine in RNA + glycolate + H(+). The enzyme catalyses an N(2)-(1-hydroxy-2-oxoethyl)-2'-deoxyguanosine in DNA + H2O = a 2'-deoxyguanosine in DNA + glycolate + H(+). Its activity is regulated as follows. Glyoxalase activity is inhibited by zinc ions at pH 7.0. Its function is as follows. Protein and nucleotide deglycase that catalyzes the deglycation of the Maillard adducts formed between amino groups of proteins or nucleotides and reactive carbonyl groups of glyoxals. Thus, functions as a protein deglycase that repairs methylglyoxal- and glyoxal-glycated proteins, and releases repaired proteins and lactate or glycolate, respectively. Deglycates cysteine, arginine and lysine residues in proteins, and thus reactivates these proteins by reversing glycation by glyoxals. Is able to repair glycated serum albumin, collagen, glyceraldehyde-3-phosphate dehydrogenase, and fructose biphosphate aldolase. Acts on early glycation intermediates (hemithioacetals and aminocarbinols), preventing the formation of advanced glycation endproducts (AGE) that cause irreversible damage. Also functions as a nucleotide deglycase able to repair glycated guanine in the free nucleotide pool (GTP, GDP, GMP, dGTP) and in DNA and RNA. Is thus involved in a major nucleotide repair system named guanine glycation repair (GG repair), dedicated to reversing methylglyoxal and glyoxal damage via nucleotide sanitization and direct nucleic acid repair. In vitro, prevents acrylamide formation in asparagine/glyoxal and asparagine/sugar mixtures at 55 degrees Celsius, likely by degrading asparagine/glyoxal Maillard adducts formed at high temperatures. Also displays an apparent glyoxalase activity that in fact reflects its deglycase activity. Is a general stress protein; is required for the protection of bacterial cells against many environmental stresses, including oxidative, thermal, osmotic, UV, and pH stresses. And plays an important role in protection against electrophile/carbonyl stress. The chain is Protein/nucleic acid deglycase 2 (yhbO) from Escherichia coli (strain K12).